A 149-amino-acid polypeptide reads, in one-letter code: uncharacterized protein (149 aa).

This is an uncharacterized protein from Escherichia coli (strain K12).